The following is a 666-amino-acid chain: Magnesium-chelatase 67 kDa subunit (666 aa).

37–44 (GRRGTGKT) is a binding site for ATP. The segment at 327–367 (LPDEEEQMQPPPPPPPPPPPPEPDKPDDPETPPDEAPKDEQ) is disordered. Pro residues predominate over residues 335 to 347 (QPPPPPPPPPPPP). A VWFA domain is found at 475–661 (LIIFVVDASG…SLAETVKSGV (187 aa)).

It belongs to the Mg-chelatase subunits D/I family.

It carries out the reaction protoporphyrin IX + Mg(2+) + ATP + H2O = Mg-protoporphyrin IX + ADP + phosphate + 3 H(+). Its pathway is porphyrin-containing compound metabolism; bacteriochlorophyll biosynthesis. Its function is as follows. Involved in bacteriochlorophyll biosynthesis; introduces a magnesium ion into protoporphyrin IX to yield Mg-protoporphyrin IX. This Heliobacterium mobile (Heliobacillus mobilis) protein is Magnesium-chelatase 67 kDa subunit (bchD).